We begin with the raw amino-acid sequence, 932 residues long: UPF0182 protein Syncc9902_1151 (932 aa).

The next 9 membrane-spanning stretches (helical) occupy residues 4–24, 40–60, 85–105, 124–144, 151–171, 201–221, 243–263, 293–313, and 315–335; these read FLWILLPPVLVVVARMHVEWV, MLQLLFAGAGSIPVFLAVLWL, VLMVSGLAFLACSVVLSDLAI, MASEWKALLPIQLAIAGVSLC, WVAVAMGFALVLVVSRAWGVW, IQLGLELLVLSGTFTTAHAVW, YRWLSIGVGTNLLGVAGLVWL, LLAFVLLVLGVSCIVRGIGHL, and RLLLLCVAAIVIIESTLTPLT.

This sequence belongs to the UPF0182 family.

It is found in the cell membrane. This chain is UPF0182 protein Syncc9902_1151, found in Synechococcus sp. (strain CC9902).